Reading from the N-terminus, the 1814-residue chain is U3 small nucleolar RNA-associated protein 10 (1814 aa).

An HEAT 1 repeat occupies 583-620; it reads LDFQALLPFLLVALTDASERVRREAAAALAAVGSLYKK. 2 helical membrane passes run 942-962 and 998-1018; these read IQSG…AIVN and ALLL…HSVM. HEAT repeat units lie at residues 1042–1079, 1249–1286, 1293–1331, and 1770–1807; these read QTID…AFEH, LTLV…QNPE, IRVL…KYGK, and ALLP…VLGE.

Belongs to the HEATR1/UTP10 family. Component of the ribosomal small subunit (SSU) processome.

Its subcellular location is the nucleus. The protein localises to the nucleolus. The protein resides in the membrane. In terms of biological role, involved in nucleolar processing of pre-18S ribosomal RNA. Involved in ribosome biosynthesis. In Neosartorya fischeri (strain ATCC 1020 / DSM 3700 / CBS 544.65 / FGSC A1164 / JCM 1740 / NRRL 181 / WB 181) (Aspergillus fischerianus), this protein is U3 small nucleolar RNA-associated protein 10.